The following is a 119-amino-acid chain: Large ribosomal subunit protein bL20 (119 aa).

The protein belongs to the bacterial ribosomal protein bL20 family.

Functionally, binds directly to 23S ribosomal RNA and is necessary for the in vitro assembly process of the 50S ribosomal subunit. It is not involved in the protein synthesizing functions of that subunit. In Azorhizobium caulinodans (strain ATCC 43989 / DSM 5975 / JCM 20966 / LMG 6465 / NBRC 14845 / NCIMB 13405 / ORS 571), this protein is Large ribosomal subunit protein bL20.